The chain runs to 110 residues: Glycine cleavage system H-like protein (110 aa).

A Lipoyl-binding domain is found at 10–97 (VEKVGDLYVF…PEENWLFKLD (88 aa)). Position 27 is an ADP-ribosyl aspartic acid (D27). Residue K56 is modified to N6-lipoyllysine.

In terms of assembly, lipoylated GcvH-L directly interacts with SAV0325, which reverses the SirTM-mediated mono-ADP-ribosylation of GcvH-L, and with the oxidoreductase SAV0322. Is lipoylated on K-56 by LplA2 (SAV0327) and then mono-ADP-ribosylated, probably on D-27, by SirTM (SAV0326). The mono-ADP-ribosylation state of GcvH-L might regulate the availability of the lipoyl moiety for redox reactions; ADP-ribosylation would inhibit the interaction of the oxidoreductase with GcvH-L when it is not required, thus ADP-ribosylation of GcvH-L might be acting to keep the response 'off' under non-stress conditions.

In terms of biological role, may act as a carrier protein for the ROS scavenging lipoyl moiety and/or as a substrate for oxidoreductases such as SAV0322 and SAV0323. The sequence is that of Glycine cleavage system H-like protein from Staphylococcus aureus (strain Mu50 / ATCC 700699).